Consider the following 264-residue polypeptide: S-adenosylmethionine decarboxylase proenzyme (264 aa).

Serine 112 (schiff-base intermediate with substrate; via pyruvic acid) is an active-site residue. Serine 112 is subject to Pyruvic acid (Ser); by autocatalysis. Histidine 117 (proton acceptor; for processing activity) is an active-site residue. Cysteine 140 functions as the Proton donor; for catalytic activity in the catalytic mechanism.

It belongs to the prokaryotic AdoMetDC family. Type 2 subfamily. As to quaternary structure, heterooctamer of four alpha and four beta chains arranged as a tetramer of alpha/beta heterodimers. Pyruvate is required as a cofactor. In terms of processing, is synthesized initially as an inactive proenzyme. Formation of the active enzyme involves a self-maturation process in which the active site pyruvoyl group is generated from an internal serine residue via an autocatalytic post-translational modification. Two non-identical subunits are generated from the proenzyme in this reaction, and the pyruvate is formed at the N-terminus of the alpha chain, which is derived from the carboxyl end of the proenzyme. The post-translation cleavage follows an unusual pathway, termed non-hydrolytic serinolysis, in which the side chain hydroxyl group of the serine supplies its oxygen atom to form the C-terminus of the beta chain, while the remainder of the serine residue undergoes an oxidative deamination to produce ammonia and the pyruvoyl group blocking the N-terminus of the alpha chain.

The enzyme catalyses S-adenosyl-L-methionine + H(+) = S-adenosyl 3-(methylsulfanyl)propylamine + CO2. Its pathway is amine and polyamine biosynthesis; S-adenosylmethioninamine biosynthesis; S-adenosylmethioninamine from S-adenosyl-L-methionine: step 1/1. Catalyzes the decarboxylation of S-adenosylmethionine to S-adenosylmethioninamine (dcAdoMet), the propylamine donor required for the synthesis of the polyamines spermine and spermidine from the diamine putrescine. The protein is S-adenosylmethionine decarboxylase proenzyme of Klebsiella pneumoniae subsp. pneumoniae (strain ATCC 700721 / MGH 78578).